A 209-amino-acid polypeptide reads, in one-letter code: Thymidine kinase (209 aa).

ATP is bound by residues 9-16 and 88-91; these read SAMNAGKT and DEAQ. Catalysis depends on glutamate 89, which acts as the Proton acceptor.

Belongs to the thymidine kinase family. Homotetramer.

It is found in the cytoplasm. It catalyses the reaction thymidine + ATP = dTMP + ADP + H(+). This Xanthomonas campestris pv. campestris (strain 8004) protein is Thymidine kinase.